The following is a 127-amino-acid chain: uncharacterized protein (127 aa).

Residues 85–107 (VYLGKIGFVLLHVFYLSCIAYYD) form a helical membrane-spanning segment.

Its subcellular location is the mitochondrion membrane. This is an uncharacterized protein from Dictyostelium discoideum (Social amoeba).